Consider the following 479-residue polypeptide: F-box protein SKIP17 (479 aa).

The F-box domain maps to 92-138; it reads NSNSWSLPPELTIKVFSMLDTKSMMQAAVCCTMFNKCAMDRLCYSHI. Residues 435–479 form a disordered region; the sequence is EMMEAEDDEVDEEDDSDDDTDDVSDEDESENDDDMGMGFDVDYLL. Residues 437-469 are compositionally biased toward acidic residues; the sequence is MEAEDDEVDEEDDSDDDTDDVSDEDESENDDDM.

As to quaternary structure, part of a SCF (ASK-cullin-F-box) protein ligase complex. Interacts with SPK1B/ASK2.

Its subcellular location is the nucleus. It functions in the pathway protein modification; protein ubiquitination. Functionally, component of SCF(ASK-cullin-F-box) E3 ubiquitin ligase complexes, which may mediate the ubiquitination and subsequent proteasomal degradation of target proteins. This chain is F-box protein SKIP17 (SKIP17), found in Arabidopsis thaliana (Mouse-ear cress).